Here is a 329-residue protein sequence, read N- to C-terminus: GTP 3',8-cyclase (329 aa).

Residues 8-234 (AFARKFFYLR…QIRQRSDGPA (227 aa)) enclose the Radical SAM core domain. A GTP-binding site is contributed by R17. The [4Fe-4S] cluster site is built by C24 and C28. Y30 provides a ligand contact to S-adenosyl-L-methionine. Residue C31 participates in [4Fe-4S] cluster binding. A GTP-binding site is contributed by R68. G72 is a binding site for S-adenosyl-L-methionine. T99 serves as a coordination point for GTP. S123 serves as a coordination point for S-adenosyl-L-methionine. K160 is a binding site for GTP. S-adenosyl-L-methionine is bound at residue M194. Positions 257 and 260 each coordinate [4Fe-4S] cluster. A GTP-binding site is contributed by 262-264 (RLR). C274 contacts [4Fe-4S] cluster.

Belongs to the radical SAM superfamily. MoaA family. As to quaternary structure, monomer and homodimer. Requires [4Fe-4S] cluster as cofactor.

It catalyses the reaction GTP + AH2 + S-adenosyl-L-methionine = (8S)-3',8-cyclo-7,8-dihydroguanosine 5'-triphosphate + 5'-deoxyadenosine + L-methionine + A + H(+). Its pathway is cofactor biosynthesis; molybdopterin biosynthesis. Its function is as follows. Catalyzes the cyclization of GTP to (8S)-3',8-cyclo-7,8-dihydroguanosine 5'-triphosphate. This is GTP 3',8-cyclase from Klebsiella pneumoniae (strain 342).